The primary structure comprises 106 residues: Tripartite terminase subunit 2 (106 aa).

It belongs to the herpesviridae TRM2 protein family. Associates with TRM1 and TRM3 to form the tripartite terminase complex.

Its subcellular location is the host nucleus. Component of the molecular motor that translocates viral genomic DNA in empty capsid during DNA packaging. Forms a tripartite terminase complex together with TRM1 and TRM3 in the host cytoplasm. Once the complex reaches the host nucleus, it interacts with the capsid portal vertex. This portal forms a ring in which genomic DNA is translocated into the capsid. In Human herpesvirus 6A (strain Uganda-1102) (HHV-6 variant A), this protein is Tripartite terminase subunit 2.